The following is a 408-amino-acid chain: MSAIKFNPSSFRKNFKWFENNKNWINFDNAATSIALDVVAEASKEYYQYFCVNPHNKNPEINQKLIAIIEETRDLLAKFFNAKKNEIIFTSSATESLNLFAFGLSSLVKSNDEIILKEDEHAANVFPWVNLAKENKAKLKIIKKTPNKSWTDAFLKACTPSTKLLVITATSNLFGNSIDYEKISKHLKKISPNSFIVVDAVQAVPHHKIDITSANIDFLTFSTHKFYGPTGLGIAFIKSELQSRLKPFKLGGDIFKSLDNNFKIIFKEGPSKFEAGTLNIMAIYALNKQLKFMQKEFNFSEMVFYSKQLKNLAYQLLSQNPNIVLANHDQDVPIFAFKHKYINSADLATFLNIKKIIVRQGSICVGKFKNKESFLRVSLLHYNTKEELLYLEKLLKTSKNSIINELIY.

K225 carries the N6-(pyridoxal phosphate)lysine modification.

This sequence belongs to the class-V pyridoxal-phosphate-dependent aminotransferase family. Csd subfamily. The cofactor is pyridoxal 5'-phosphate.

It carries out the reaction (sulfur carrier)-H + L-cysteine = (sulfur carrier)-SH + L-alanine. Functionally, catalyzes the removal of elemental sulfur and selenium atoms from L-cysteine, L-cystine, L-selenocysteine, and L-selenocystine to produce L-alanine. The sequence is that of Probable cysteine desulfurase (csd) from Mycoplasma genitalium (strain ATCC 33530 / DSM 19775 / NCTC 10195 / G37) (Mycoplasmoides genitalium).